The sequence spans 465 residues: Lysophospholipid acyltransferase 2 (465 aa).

Transmembrane regions (helical) follow at residues 15–35, 55–75, 86–106, 161–181, 214–234, 266–286, 356–376, 399–419, and 434–454; these read VSVAVLRFLLCFVATIPISFL, FLSYLSFGFSSNLHFLVPMTI, LSGFITFFLGFAYLIGCHVFY, SLIEYFGYCLCCGSHFAGPVF, AVFQAAICMALYLYLVPQFPL, YFIWSISEASIIISGLGFSGW, AVWHGLYPGYIIFFVQSALMI, VLVLINFLYTVVVLNYSSVGF, and VYYIGTVIPIAVLLLSYLVPV. Residue His-359 is part of the active site.

Belongs to the membrane-bound acyltransferase family. As to quaternary structure, interacts with GPAT9 and DGAT1. As to expression, expressed in rosette leaves, pollen grains, developing embryos and developing seeds.

Its subcellular location is the endoplasmic reticulum membrane. It catalyses the reaction a 1-acyl-sn-glycero-3-phosphocholine + an acyl-CoA = a 1,2-diacyl-sn-glycero-3-phosphocholine + CoA. It carries out the reaction 1-(9Z-octadecenoyl)-sn-glycero-3-phosphocholine + (9Z)-octadecenoyl-CoA = 1,2-di-(9Z-octadecenoyl)-sn-glycero-3-phosphocholine + CoA. The enzyme catalyses 1-(9Z-octadecenoyl)-sn-glycero-3-phosphocholine + (9Z,12Z)-octadecadienoyl-CoA = 1-(9Z)-octadecenoyl-2-(9Z,12Z)-octadecadienoyl-sn-glycero-3-phosphocholine + CoA. The catalysed reaction is (9Z,12Z,15Z)-octadecatrienoyl-CoA + 1-(9Z-octadecenoyl)-sn-glycero-3-phosphocholine = 1-(9Z-octadecaenoyl)-2-(9Z,12Z,15Z-octadecatrienoyl)-sn-glycero-3-phosphocholine + CoA. It catalyses the reaction a 1-acyl-sn-glycero-3-phosphoethanolamine + an acyl-CoA = a 1,2-diacyl-sn-glycero-3-phosphoethanolamine + CoA. It carries out the reaction a 1-acyl-sn-glycero-3-phospho-L-serine + an acyl-CoA = a 1,2-diacyl-sn-glycero-3-phospho-L-serine + CoA. In terms of biological role, lysophospholipid acyltransferase with broad specificity. Mediates the conversion of lysophosphatidylethanolamine (1-acyl-sn-glycero-3-phosphoethanolamine or LPE) into phosphatidylethanolamine (1,2-diacyl-sn-glycero-3-phosphoethanolamine or PE) (LPEAT activity). Catalyzes the acylation of lysophosphatidylserine (1-acyl-2-hydroxy-sn-glycero-3-phospho-L-serine or LPS) into phosphatidylserine (1,2-diacyl-sn-glycero-3-phospho-L-serine or PS) (LPSAT activity). Can convert lysophosphatidylcholine (1-acyl-sn-glycero-3-phosphocholine or LPC) into phosphatidylcholine (1,2-diacyl-sn-glycero-3-phosphocholine or PC) (LPCAT activity). Exhibits preference for C18-unsaturated acyl-CoA when transferring an acyl group to lysophosphatidylcholine. Can also utilize lysophosphatidylglycerol (LPG) as substrate in vitro. Has neither activity towards lysophosphatidic acid (LPA) nor lysophosphatidylinositol (LPI). Lysophospholipid acyltransferases catalyze the reacylation step of the phospholipid remodeling pathway also known as the Lands cycle. The primary function of the Lands cycle is to provide a route for acyl remodeling to modify fatty acid (FA) composition of phospholipids derived from the Kennedy pathway. Is involved in PC acyl editing and phosphocholine headgroup exchange between PC and diacylglycerols. This processes control the majority of acyl fluxes through PC to provide polyunsaturated fatty acids for triacylglycerols synthesis in seeds. Involved with LPCAT1 in the direct incorporation of newly synthesized fatty acids exported form the chloroplast into PC through acyl editing. This Arabidopsis thaliana (Mouse-ear cress) protein is Lysophospholipid acyltransferase 2.